The chain runs to 156 residues: Biotin carboxyl carrier protein of acetyl-CoA carboxylase (156 aa).

The Biotinyl-binding domain occupies 80–156; that stretch reads GNVVRSPMVG…EFDQPLFTIV (77 aa). Lys-122 carries the post-translational modification N6-biotinyllysine.

In terms of assembly, homodimer.

It functions in the pathway lipid metabolism; fatty acid biosynthesis. In terms of biological role, this protein is a component of the acetyl coenzyme A carboxylase complex; first, biotin carboxylase catalyzes the carboxylation of the carrier protein and then the transcarboxylase transfers the carboxyl group to form malonyl-CoA. In Pseudomonas aeruginosa (strain ATCC 15692 / DSM 22644 / CIP 104116 / JCM 14847 / LMG 12228 / 1C / PRS 101 / PAO1), this protein is Biotin carboxyl carrier protein of acetyl-CoA carboxylase (accB).